A 467-amino-acid chain; its full sequence is Receptor-like cytosolic serine/threonine-protein kinase RBK1 (467 aa).

Residues 1-24 (MAVEDNKNSESKNHQEVELHRNDL) are compositionally biased toward basic and acidic residues. Positions 1–73 (MAVEDNKNSE…PFSNTTKTVS (73 aa)) are disordered. Residues 40-71 (SDSDNSSSSCSSCSSDDKSSSTSSPFSNTTKT) show a composition bias toward low complexity. The residue at position 142 (Thr-142) is a Phosphothreonine. The region spanning 153-430 (FNPENMIGKG…LRGEDGPAEL (278 aa)) is the Protein kinase domain. ATP is bound by residues 159-167 (IGKGGHAEV) and Lys-181. The Proton acceptor role is filled by Asp-278. Phosphoserine is present on Ser-282. Thr-318 carries the phosphothreonine modification. Tyr-326 carries the post-translational modification Phosphotyrosine.

The protein belongs to the protein kinase superfamily. Ser/Thr protein kinase family. As to quaternary structure, interacts with ARAC5 and ARAC10. Mostly expressed in vasculature, hydathode endothem, leaf mesophyll cells and trichomes.

Its subcellular location is the cytoplasm. It is found in the endomembrane system. It localises to the nucleus. It catalyses the reaction L-seryl-[protein] + ATP = O-phospho-L-seryl-[protein] + ADP + H(+). It carries out the reaction L-threonyl-[protein] + ATP = O-phospho-L-threonyl-[protein] + ADP + H(+). The chain is Receptor-like cytosolic serine/threonine-protein kinase RBK1 (RBK1) from Arabidopsis thaliana (Mouse-ear cress).